A 346-amino-acid polypeptide reads, in one-letter code: Carbamoyl phosphate synthase small chain (346 aa).

The tract at residues 1 to 160 is CPSase; it reads MEDGSVFAGR…SVKEPVLLGE (160 aa). Residues Ser-39, Gly-209, and Gly-211 each contribute to the L-glutamine site. In terms of domain architecture, Glutamine amidotransferase type-1 spans 164–346; it reads CIGVVDCGVK…FLKLVERHGH (183 aa). The active-site Nucleophile is the Cys-237. Residues Leu-238, Gln-241, Asn-280, Gly-282, and Tyr-283 each contribute to the L-glutamine site. Residues His-320 and Glu-322 contribute to the active site.

Belongs to the CarA family. In terms of assembly, composed of two chains; the small (or glutamine) chain promotes the hydrolysis of glutamine to ammonia, which is used by the large (or ammonia) chain to synthesize carbamoyl phosphate. Tetramer of heterodimers (alpha,beta)4.

The enzyme catalyses hydrogencarbonate + L-glutamine + 2 ATP + H2O = carbamoyl phosphate + L-glutamate + 2 ADP + phosphate + 2 H(+). It catalyses the reaction L-glutamine + H2O = L-glutamate + NH4(+). It participates in amino-acid biosynthesis; L-arginine biosynthesis; carbamoyl phosphate from bicarbonate: step 1/1. It functions in the pathway pyrimidine metabolism; UMP biosynthesis via de novo pathway; (S)-dihydroorotate from bicarbonate: step 1/3. In terms of biological role, small subunit of the glutamine-dependent carbamoyl phosphate synthetase (CPSase). CPSase catalyzes the formation of carbamoyl phosphate from the ammonia moiety of glutamine, carbonate, and phosphate donated by ATP, constituting the first step of 2 biosynthetic pathways, one leading to arginine and/or urea and the other to pyrimidine nucleotides. The small subunit (glutamine amidotransferase) binds and cleaves glutamine to supply the large subunit with the substrate ammonia. This chain is Carbamoyl phosphate synthase small chain, found in Pyrobaculum aerophilum (strain ATCC 51768 / DSM 7523 / JCM 9630 / CIP 104966 / NBRC 100827 / IM2).